Reading from the N-terminus, the 192-residue chain is Probable nicotinate-nucleotide adenylyltransferase (192 aa).

Belongs to the NadD family.

The enzyme catalyses nicotinate beta-D-ribonucleotide + ATP + H(+) = deamido-NAD(+) + diphosphate. It functions in the pathway cofactor biosynthesis; NAD(+) biosynthesis; deamido-NAD(+) from nicotinate D-ribonucleotide: step 1/1. In terms of biological role, catalyzes the reversible adenylation of nicotinate mononucleotide (NaMN) to nicotinic acid adenine dinucleotide (NaAD). This Bradyrhizobium sp. (strain ORS 278) protein is Probable nicotinate-nucleotide adenylyltransferase.